Here is a 209-residue protein sequence, read N- to C-terminus: Ubiquinone biosynthesis protein COQ4 homolog 2, mitochondrial (209 aa).

Zn(2+) contacts are provided by His-118, Asp-119, His-122, and Glu-134.

Belongs to the COQ4 family. Component of a multi-subunit COQ enzyme complex. The cofactor is Zn(2+).

The protein localises to the mitochondrion inner membrane. It catalyses the reaction a 4-hydroxy-3-methoxy-5-(all-trans-polyprenyl)benzoate + H(+) = a 2-methoxy-6-(all-trans-polyprenyl)phenol + CO2. It functions in the pathway cofactor biosynthesis; ubiquinone biosynthesis. In terms of biological role, lyase that catalyzes the C1-decarboxylation of 4-hydroxy-3-methoxy-5-(all-trans-polyprenyl)benzoic acid into 2-methoxy-6-(all-trans-polyprenyl)phenol during ubiquinone biosynthesis. The polypeptide is Ubiquinone biosynthesis protein COQ4 homolog 2, mitochondrial (Paramecium tetraurelia).